Here is a 306-residue protein sequence, read N- to C-terminus: MIKQRTLKQATTVTGIGLHSGQKVKLTLRPAPANTGIIYARTDLTPAVYFTADANLVGDTTLCTCMINDDGVRISTVEHLNAAVSALGLDNLIIEVNAPEVPIMDGSSSPFIYLLLDAGIEEQESPKKFIRIKQTVRIEDGDKWAELKPYNNGLKLDFTIEFNHPMISKDVRHFNMELSAKNFIHNISRARTFTFMKDVEYLQSMGLALGGSLDNAIVLDEYRILNEEGLRYKDELVKHKMLDSIGDLFMCGYNILGEFTAYKSGHGLNNKLLRAVLANKNAWEFVTFDDTQQAPQGYQIGEQVFI.

Zn(2+)-binding residues include histidine 79, histidine 239, and aspartate 243. Histidine 266 functions as the Proton donor in the catalytic mechanism.

It belongs to the LpxC family. Requires Zn(2+) as cofactor.

It carries out the reaction a UDP-3-O-[(3R)-3-hydroxyacyl]-N-acetyl-alpha-D-glucosamine + H2O = a UDP-3-O-[(3R)-3-hydroxyacyl]-alpha-D-glucosamine + acetate. The protein operates within glycolipid biosynthesis; lipid IV(A) biosynthesis; lipid IV(A) from (3R)-3-hydroxytetradecanoyl-[acyl-carrier-protein] and UDP-N-acetyl-alpha-D-glucosamine: step 2/6. Its function is as follows. Catalyzes the hydrolysis of UDP-3-O-myristoyl-N-acetylglucosamine to form UDP-3-O-myristoylglucosamine and acetate, the committed step in lipid A biosynthesis. This chain is UDP-3-O-acyl-N-acetylglucosamine deacetylase, found in Haemophilus ducreyi (strain 35000HP / ATCC 700724).